Consider the following 124-residue polypeptide: Fluoride-specific ion channel FluC (124 aa).

The next 4 helical transmembrane spans lie at 4–24 (VLYI…LSGW), 32–52 (AFPY…GLIM), 67–87 (IGLT…SYET), and 101–121 (ANVL…IIVA). The Na(+) site is built by G75 and T78.

It belongs to the fluoride channel Fluc/FEX (TC 1.A.43) family.

The protein localises to the cell inner membrane. It carries out the reaction fluoride(in) = fluoride(out). Na(+) is not transported, but it plays an essential structural role and its presence is essential for fluoride channel function. Fluoride-specific ion channel. Important for reducing fluoride concentration in the cell, thus reducing its toxicity. The chain is Fluoride-specific ion channel FluC from Geotalea uraniireducens (strain Rf4) (Geobacter uraniireducens).